Reading from the N-terminus, the 199-residue chain is Golgi to ER traffic protein 1 (199 aa).

The Lumenal portion of the chain corresponds to 1 to 11 (MLLPDLHPYTI). A helical transmembrane segment spans residues 12–31 (LLSIFLVLVAKQLVATIGKS). Residues 32–115 (TIQEFVWLVY…SIDKASNALI (84 aa)) are Cytoplasmic-facing. Residues 76–116 (YAKWTKLNRQADKLSAELQKLNQEIQQQKSSIDKASNALIL) are a coiled coil. Residues 116–136 (LVLTTLPIWIARVFYRKTHLF) form a helical membrane-spanning segment. Residues 137 to 160 (YIRQGIFPKYVEWVLALPFLPNGA) lie on the Lumenal side of the membrane. The helical transmembrane segment at 161–177 (VGLTIWMFAVNSVVSNF) threads the bilayer. Residues 178-199 (SFLVSFPFAKRVSKPVRDTKVE) are Cytoplasmic-facing.

It belongs to the WRB/GET1 family. As to quaternary structure, component of the Golgi to ER traffic (GET) complex, which is composed of GET1, GET2 and GET3. Within the complex, GET1 and GET2 form a heterotetramer which is stabilized by phosphatidylinositol binding and which binds to the GET3 homodimer.

The protein localises to the endoplasmic reticulum membrane. It localises to the golgi apparatus membrane. Required for the post-translational delivery of tail-anchored (TA) proteins to the endoplasmic reticulum. Together with GET2, acts as a membrane receptor for soluble GET3, which recognizes and selectively binds the transmembrane domain of TA proteins in the cytosol. The GET complex cooperates with the HDEL receptor ERD2 to mediate the ATP-dependent retrieval of resident ER proteins that contain a C-terminal H-D-E-L retention signal from the Golgi to the ER. This Candida albicans (strain SC5314 / ATCC MYA-2876) (Yeast) protein is Golgi to ER traffic protein 1.